Consider the following 119-residue polypeptide: UPF0102 protein MS1289 (119 aa).

This sequence belongs to the UPF0102 family.

This chain is UPF0102 protein MS1289, found in Mannheimia succiniciproducens (strain KCTC 0769BP / MBEL55E).